A 161-amino-acid chain; its full sequence is Cyclic pyranopterin monophosphate synthase (161 aa).

Substrate is bound by residues 75–77 (LCH) and 113–114 (ME). D128 is a catalytic residue.

Belongs to the MoaC family. Homohexamer; trimer of dimers.

It carries out the reaction (8S)-3',8-cyclo-7,8-dihydroguanosine 5'-triphosphate = cyclic pyranopterin phosphate + diphosphate. Its pathway is cofactor biosynthesis; molybdopterin biosynthesis. Catalyzes the conversion of (8S)-3',8-cyclo-7,8-dihydroguanosine 5'-triphosphate to cyclic pyranopterin monophosphate (cPMP). The protein is Cyclic pyranopterin monophosphate synthase of Citrobacter koseri (strain ATCC BAA-895 / CDC 4225-83 / SGSC4696).